We begin with the raw amino-acid sequence, 257 residues long: UPF0246 protein PC1_3665 (257 aa).

Belongs to the UPF0246 family.

The chain is UPF0246 protein PC1_3665 from Pectobacterium carotovorum subsp. carotovorum (strain PC1).